The sequence spans 125 residues: uncharacterized protein (125 aa).

This is an uncharacterized protein from Pasteurella multocida (strain Pm70).